A 141-amino-acid polypeptide reads, in one-letter code: Small ribosomal subunit protein uS19 (141 aa).

This sequence belongs to the universal ribosomal protein uS19 family.

Functionally, protein S19 forms a complex with S13 that binds strongly to the 16S ribosomal RNA. This Halorubrum lacusprofundi (strain ATCC 49239 / DSM 5036 / JCM 8891 / ACAM 34) protein is Small ribosomal subunit protein uS19.